A 191-amino-acid polypeptide reads, in one-letter code: Ion-translocating oxidoreductase complex subunit B (191 aa).

The interval 1-26 (MSAVLIAVLALLALCLLGGAILGFAA) is hydrophobic. In terms of domain architecture, 4Fe-4S spans 32–90 (EGDPIAEQINALLPQTQCGQCGYPGCKPYAEAIAGGDKINKCPPGGEATIQALADLLDV). 12 residues coordinate [4Fe-4S] cluster: cysteine 49, cysteine 52, cysteine 57, cysteine 73, cysteine 114, cysteine 117, cysteine 120, cysteine 124, cysteine 144, cysteine 147, cysteine 150, and cysteine 154. 4Fe-4S ferredoxin-type domains are found at residues 105–134 (MVAYIREAECIGCTKCIQACPVDAIVGAAR) and 135–164 (QMHTVIISECTGCDLCVEPCPVDCIDMIEV).

This sequence belongs to the 4Fe4S bacterial-type ferredoxin family. RnfB subfamily. As to quaternary structure, the complex is composed of six subunits: RnfA, RnfB, RnfC, RnfD, RnfE and RnfG. It depends on [4Fe-4S] cluster as a cofactor.

It is found in the cell inner membrane. Its function is as follows. Part of a membrane-bound complex that couples electron transfer with translocation of ions across the membrane. The chain is Ion-translocating oxidoreductase complex subunit B from Stutzerimonas stutzeri (strain A1501) (Pseudomonas stutzeri).